The chain runs to 724 residues: 1,4-alpha-glucan branching enzyme GlgB 1 (724 aa).

The Nucleophile role is filled by aspartate 403. Glutamate 456 (proton donor) is an active-site residue.

The protein belongs to the glycosyl hydrolase 13 family. GlgB subfamily. As to quaternary structure, monomer.

It catalyses the reaction Transfers a segment of a (1-&gt;4)-alpha-D-glucan chain to a primary hydroxy group in a similar glucan chain.. It participates in glycan biosynthesis; glycogen biosynthesis. Its function is as follows. Catalyzes the formation of the alpha-1,6-glucosidic linkages in glycogen by scission of a 1,4-alpha-linked oligosaccharide from growing alpha-1,4-glucan chains and the subsequent attachment of the oligosaccharide to the alpha-1,6 position. This chain is 1,4-alpha-glucan branching enzyme GlgB 1, found in Xanthomonas campestris pv. campestris (strain 8004).